Here is a 390-residue protein sequence, read N- to C-terminus: MATNGEIFNTYGHNRQTATVTKITASNESSNGVCYLSETANLGKLICIPMALRAAMELNVFQLISKFGTDAKVSASEIASKMPNAKNNPEAAMYLDRILRLLGASSILSVSTTKKSINRGGDDVVVHEKLYGLTNSSCCLVPRQEDGVSLVEELLFTSDKVVVDSFFKLKCVVEEKDSVPFEVAHGAKIFEYAATEPRMNQVFNDGMAVFSIVVFEAVFRFYDGFLDMKELLDVGGGIGTSVSKIVAKYPLIRGVNFDLPHVISVAPQYPGVEHVAGDMFEEVPKGQNMLLKWVLHDWGDERCVKLLKNCWNSLPVGGKVLIIEFVLPNELGNNAESFNALIPDLLLMALNPGGKERTISEYDDLGKAAGFIKTIPIPISNGLHVIEFHK.

Substrate is bound at residue Glu-153. S-adenosyl-L-methionine-binding positions include Met-207, Ser-211, Gly-235, Asp-258, 278-279 (DM), and Lys-292. Catalysis depends on His-296, which acts as the Proton acceptor. 296–297 (HD) provides a ligand contact to substrate.

Belongs to the class I-like SAM-binding methyltransferase superfamily. Cation-independent O-methyltransferase family. COMT subfamily. As to quaternary structure, homodimer. As to expression, highly expressed in capsules. Expressed is stems. Expressed at low levels in roots.

The catalysed reaction is (S)-scoulerine + S-adenosyl-L-methionine = (S)-tetrahydrocolumbamine + S-adenosyl-L-homocysteine + H(+). It catalyses the reaction (S)-tetrahydrocolumbamine + S-adenosyl-L-methionine = (S)-tetrahydropalmatine + S-adenosyl-L-homocysteine + H(+). It carries out the reaction (S)-norreticuline + S-adenosyl-L-methionine = (S)-norcodamine + S-adenosyl-L-homocysteine + H(+). The enzyme catalyses (S)-reticuline + S-adenosyl-L-methionine = (S)-codamine + S-adenosyl-L-homocysteine + H(+). The protein operates within alkaloid biosynthesis. Functionally, methyltransferase involved in the biosynthesis of the benzylisoquinoline alkaloid noscapine. Catalyzes the conversion of (S)-scoulerine to (S)-tetrahydrocolumbamine. Can convert (S)-tetrahydrocolumbamine to tetrahydropalmatine. Can convert (S)-norreticuline to (S)-norcodamine. Can convert (S)-reticuline to (S)-codamine. Substrate preference is (S)-scoulerine &gt; (S)-tetrahydrocolumbamine &gt; (S)-norreticuline &gt; (S)-reticuline. The sequence is that of Scoulerine-9-O-methyltransferase 1 from Papaver somniferum (Opium poppy).